Reading from the N-terminus, the 384-residue chain is DNA replication and repair protein RecF (384 aa).

An ATP-binding site is contributed by 30–37 (GENAQGKT).

The protein belongs to the RecF family.

It localises to the cytoplasm. In terms of biological role, the RecF protein is involved in DNA metabolism; it is required for DNA replication and normal SOS inducibility. RecF binds preferentially to single-stranded, linear DNA. It also seems to bind ATP. The sequence is that of DNA replication and repair protein RecF from Levilactobacillus brevis (strain ATCC 367 / BCRC 12310 / CIP 105137 / JCM 1170 / LMG 11437 / NCIMB 947 / NCTC 947) (Lactobacillus brevis).